Here is a 1040-residue protein sequence, read N- to C-terminus: Multidrug resistance protein MdtB (1040 aa).

12 consecutive transmembrane segments (helical) span residues 16 to 36 (FIMRPVATTLLMVAILLAGII), 347 to 367 (LMMAIALVVMIIYLFLRNIPA), 369 to 389 (IIPGVAVPLSLIGTFAVMVFL), 396 to 416 (LTLMALTIATGFVVDDAIVVI), 440 to 460 (IGFTIISLTFSLIAVLIPLLF), 472 to 492 (FAITLAVAILISAVVSLTLTP), 537 to 557 (WLTLSVALSTLLLSVLLWVFI), 863 to 883 (LGSTVWLIVAAVVAMYIVLGI), 888 to 908 (FIHPITILSTLPTAGVGALLA), 911 to 931 (IAGSELDVIAIIGIILLIGIV), 968 to 988 (ILMTTLAALLGALPLMLSTGV), and 998 to 1018 (IGMVGGLIVSQVLTLFTTPVI).

It belongs to the resistance-nodulation-cell division (RND) (TC 2.A.6) family. MdtB subfamily. As to quaternary structure, part of a tripartite efflux system composed of MdtA, MdtB and MdtC. MdtB forms a heteromultimer with MdtC.

Its subcellular location is the cell inner membrane. Functionally, the MdtABC tripartite complex confers resistance against novobiocin and deoxycholate. This Escherichia coli O17:K52:H18 (strain UMN026 / ExPEC) protein is Multidrug resistance protein MdtB.